We begin with the raw amino-acid sequence, 32 residues long: MSDIN-like toxin proprotein 3 (32 aa).

The propeptide occupies 1–10 (MSDINATRLP). The cyclopeptide (Ser-Pro) cross-link spans 11–17 (SFFFPIP). A propeptide spanning residues 18-32 (CISDDIEMVLTRGER) is cleaved from the precursor.

The protein belongs to the MSDIN fungal toxin family. In terms of processing, processed by the macrocyclase-peptidase enzyme POPB to yield a toxic cyclic heptapeptide. POPB first removes 10 residues from the N-terminus. Conformational trapping of the remaining peptide forces the enzyme to release this intermediate rather than proceed to macrocyclization. The enzyme rebinds the remaining peptide in a different conformation and catalyzes macrocyclization of the N-terminal 8 residues.

Probable toxin that belongs to the MSDIN-like toxin family responsible for a large number of food poisoning cases and deaths. The polypeptide is MSDIN-like toxin proprotein 3 (Amanita phalloides (Death cap)).